Reading from the N-terminus, the 244-residue chain is DNA polymerase sliding clamp (244 aa).

Belongs to the PCNA family. As to quaternary structure, homotrimer. The subunits circularize to form a toroid; DNA passes through its center. Replication factor C (RFC) is required to load the toroid on the DNA.

Sliding clamp subunit that acts as a moving platform for DNA processing. Responsible for tethering the catalytic subunit of DNA polymerase and other proteins to DNA during high-speed replication. The chain is DNA polymerase sliding clamp from Methanothrix thermoacetophila (strain DSM 6194 / JCM 14653 / NBRC 101360 / PT) (Methanosaeta thermophila).